The primary structure comprises 280 residues: uncharacterized protein (280 aa).

This is an uncharacterized protein from Aedes vexans (Inland floodwater mosquito).